The primary structure comprises 180 residues: Large ribosomal subunit protein uL18m (180 aa).

The protein belongs to the universal ribosomal protein uL18 family. As to quaternary structure, component of the mitochondrial large ribosomal subunit (mt-LSU). Mature mammalian 55S mitochondrial ribosomes consist of a small (28S) and a large (39S) subunit. The 28S small subunit contains a 12S ribosomal RNA (12S mt-rRNA) and 30 different proteins. The 39S large subunit contains a 16S rRNA (16S mt-rRNA), a copy of mitochondrial valine transfer RNA (mt-tRNA(Val)), which plays an integral structural role, and 52 different proteins.

It localises to the mitochondrion. Its function is as follows. Together with thiosulfate sulfurtransferase (TST), acts as a mitochondrial import factor for the cytosolic 5S rRNA. The precursor form shows RNA chaperone activity; is able to fold the 5S rRNA into an import-competent conformation that is recognized by rhodanese (TST). Both the cytoplasmic and mitochondrial forms are able to bind to the helix IV-loop D in the gamma domain of the 5S rRNA. In Homo sapiens (Human), this protein is Large ribosomal subunit protein uL18m (MRPL18).